We begin with the raw amino-acid sequence, 93 residues long: Stromal cell-derived factor 1 (93 aa).

Positions 1 to 21 (MNAKVVVVLVLVLTALCLSDG) are cleaved as a signal peptide. A Receptor activation motif motif is present at residues 22–23 (KP). The tract at residues 29–33 (RCPCR) is receptor and heparin binding. 2 disulfide bridges follow: C30-C55 and C32-C71. Receptor binding stretches follow at residues 39-41 (VAR), 48-50 (KIL), and 60-70 (VARLKNNNRQV). Heparin-binding positions include 41–51 (RANVKHLKILN), R62, Q69, and K85.

Belongs to the intercrine alpha (chemokine CxC) family. Monomer or homodimer; in equilibrium. Dimer formation is induced by non acidic pH and the presence of multivalent anions, and by binding to CXCR4 or heparin. Monomeric form is required for full chemotactic activity and resistance to ischemia/reperfusion injury, whereas the dimeric form acts as a partial agonist of CXCR4, stimulating Ca2+ mobilization but with no chemotactic activity and instead acts as a selective antagonist that blocks chemotaxis induced by the monomeric form. Interacts with the N-terminus of ACKR3. Interacts with integrin subunit ITGB3 (via the allosteric site (site 2)). Interacts with TNFAIP6 (via Link domain). As to quaternary structure, (Microbial infection) Interacts with molluscum contagiosum virus protein MC148. In terms of processing, processed forms SDF-1-beta(3-72) and SDF-1-alpha(3-67) are produced after secretion by proteolytic cleavage of isoforms Beta and Alpha, respectively. The N-terminal processing is probably achieved by DPP4. Isoform Alpha is first cleaved at the C-terminus to yield a SDF-1-alpha(1-67) intermediate before being processed at the N-terminus. The C-terminal processing of isoform Alpha is reduced by binding to heparin and, probably, cell surface proteoglycans. As to expression, isoform Alpha and isoform Beta are ubiquitously expressed, with highest levels detected in liver, pancreas and spleen. Isoform Gamma is mainly expressed in heart, with weak expression detected in several other tissues. Isoform Delta, isoform Epsilon and isoform Theta have highest expression levels in pancreas, with lower levels detected in heart, kidney, liver and spleen.

Its subcellular location is the secreted. Chemoattractant active on T-lymphocytes and monocytes but not neutrophils. Activates the C-X-C chemokine receptor CXCR4 to induce a rapid and transient rise in the level of intracellular calcium ions and chemotaxis. SDF-1-beta(3-72) and SDF-1-alpha(3-67) show a reduced chemotactic activity. Binding to cell surface proteoglycans seems to inhibit formation of SDF-1-alpha(3-67) and thus to preserve activity on local sites. Also binds to atypical chemokine receptor ACKR3, which activates the beta-arrestin pathway and acts as a scavenger receptor for SDF-1. Binds to the allosteric site (site 2) of integrins and activates integrins ITGAV:ITGB3, ITGA4:ITGB1 and ITGA5:ITGB1 in a CXCR4-independent manner. Acts as a positive regulator of monocyte migration and a negative regulator of monocyte adhesion via the LYN kinase. Stimulates migration of monocytes and T-lymphocytes through its receptors, CXCR4 and ACKR3, and decreases monocyte adherence to surfaces coated with ICAM-1, a ligand for beta-2 integrins. SDF1A/CXCR4 signaling axis inhibits beta-2 integrin LFA-1 mediated adhesion of monocytes to ICAM-1 through LYN kinase. Inhibits CXCR4-mediated infection by T-cell line-adapted HIV-1. Plays a protective role after myocardial infarction. Induces down-regulation and internalization of ACKR3 expressed in various cells. Has several critical functions during embryonic development; required for B-cell lymphopoiesis, myelopoiesis in bone marrow and heart ventricular septum formation. Stimulates the proliferation of bone marrow-derived B-cell progenitors in the presence of IL7 as well as growth of stromal cell-dependent pre-B-cells. The chain is Stromal cell-derived factor 1 (CXCL12) from Homo sapiens (Human).